Consider the following 883-residue polypeptide: 3-hydroxy-3-methylglutaryl-coenzyme A reductase (883 aa).

Residues M1–H9 are Cytoplasmic-facing. A helical transmembrane segment spans residues G10–G39. The Lumenal portion of the chain corresponds to N40–D56. Residues V57 to F78 traverse the membrane as a helical segment. At Q79–K89 the chain is on the cytoplasmic side. Residues Y90–L114 form a helical membrane-spanning segment. Residues D115–E123 are Lumenal-facing. The chain crosses the membrane as a helical span at residues A124 to S149. At Q150 to R159 the chain is on the cytoplasmic side. Residues G160–V187 traverse the membrane as a helical segment. At R188–E191 the chain is on the lumenal side. The helical transmembrane segment at I192 to L220 threads the bilayer. At E221–K249 the chain is on the cytoplasmic side. A helical membrane pass occupies residues P250–S276. Topologically, residues E277 to R316 are lumenal. N282 is a glycosylation site (N-linked (GlcNAc...) asparagine). Residues M317–F341 form a helical membrane-spanning segment. The Cytoplasmic portion of the chain corresponds to E342–A883. The disordered stretch occupies residues R373–E396. Active-site charge relay system residues include E554, K686, and D762. H861 acts as the Proton donor in catalysis.

It belongs to the HMG-CoA reductase family. In terms of assembly, homotetramer. Homodimer.

Its subcellular location is the endoplasmic reticulum membrane. The protein resides in the peroxisome membrane. The enzyme catalyses (R)-mevalonate + 2 NADP(+) + CoA = (3S)-3-hydroxy-3-methylglutaryl-CoA + 2 NADPH + 2 H(+). The protein operates within metabolic intermediate biosynthesis; (R)-mevalonate biosynthesis; (R)-mevalonate from acetyl-CoA: step 3/3. In terms of biological role, catalyzes the conversion of (3S)-hydroxy-3-methylglutaryl-CoA (HMG-CoA) to mevalonic acid, the rate-limiting step in the synthesis of cholesterol and other isoprenoids, thus plays a critical role in cellular cholesterol homeostasis. This Xenopus laevis (African clawed frog) protein is 3-hydroxy-3-methylglutaryl-coenzyme A reductase (hmgcr).